The primary structure comprises 283 residues: GTPase Era (283 aa).

The 169-residue stretch at 7–175 (YCGHVIIVGK…KNIIKSYLPE (169 aa)) folds into the Era-type G domain. A G1 region spans residues 15 to 22 (GKANVGKS). 15–22 (GKANVGKS) contributes to the GTP binding site. Positions 41-45 (NTTQS) are G2. A G3 region spans residues 62–65 (DTPG). Residues 62–66 (DTPGV) and 124–127 (NKID) each bind GTP. The segment at 124-127 (NKID) is G4. The interval 154 to 156 (ISA) is G5. The KH type-2 domain maps to 198 to 283 (IREQLILFLG…HLVLWVKDKN (86 aa)).

It belongs to the TRAFAC class TrmE-Era-EngA-EngB-Septin-like GTPase superfamily. Era GTPase family. Monomer.

Its subcellular location is the cytoplasm. It is found in the cell membrane. In terms of biological role, an essential GTPase that binds both GDP and GTP, with rapid nucleotide exchange. Plays a role in 16S rRNA processing and 30S ribosomal subunit biogenesis and possibly also in cell cycle regulation and energy metabolism. This Buchnera aphidicola subsp. Acyrthosiphon pisum (strain Tuc7) protein is GTPase Era.